The chain runs to 204 residues: Dof zinc finger protein DOF3.1 (204 aa).

The tract at residues 1–25 (MQDPAAYYQTMMAKQQQQQQPQFAE) is disordered. The Dof-type zinc finger occupies 29 to 83 (LKCPRCDSPNTKFCYYNNYNLSQPRHFCKSCRRYWTKGGALRNVPVGGGSRKNAT). The Zn(2+) site is built by Cys-31, Cys-34, Cys-56, and Cys-59. 2 disordered regions span residues 70 to 128 (RNVP…TRML) and 182 to 204 (RTEPGNNNNNPWTDLAMNRAEKN). Over residues 84 to 102 (KRSTSSSSSASSPSNSSQN) the composition is skewed to low complexity. The segment covering 106 to 124 (KNPDPDPDPRNSQKPDLDP) has biased composition (basic and acidic residues).

The protein localises to the nucleus. In terms of biological role, transcription factor that binds specifically to a 5'-AA[AG]G-3' consensus core sequence. In Arabidopsis thaliana (Mouse-ear cress), this protein is Dof zinc finger protein DOF3.1 (DOF3.1).